A 283-amino-acid polypeptide reads, in one-letter code: tRNA dimethylallyltransferase (283 aa).

The tract at residues 5-8 is interaction with substrate tRNA; that stretch reads DSML.

It belongs to the IPP transferase family. As to quaternary structure, monomer. Mg(2+) is required as a cofactor.

It catalyses the reaction adenosine(37) in tRNA + dimethylallyl diphosphate = N(6)-dimethylallyladenosine(37) in tRNA + diphosphate. Functionally, catalyzes the transfer of a dimethylallyl group onto the adenine at position 37 in tRNAs that read codons beginning with uridine, leading to the formation of N6-(dimethylallyl)adenosine (i(6)A). The chain is tRNA dimethylallyltransferase from Desulforamulus reducens (strain ATCC BAA-1160 / DSM 100696 / MI-1) (Desulfotomaculum reducens).